The primary structure comprises 1076 residues: DNA-directed RNA polymerase subunit beta (1076 aa).

The protein belongs to the RNA polymerase beta chain family. As to quaternary structure, in plastids the minimal PEP RNA polymerase catalytic core is composed of four subunits: alpha, beta, beta', and beta''. When a (nuclear-encoded) sigma factor is associated with the core the holoenzyme is formed, which can initiate transcription.

Its subcellular location is the plastid. The protein localises to the chloroplast. The catalysed reaction is RNA(n) + a ribonucleoside 5'-triphosphate = RNA(n+1) + diphosphate. Functionally, DNA-dependent RNA polymerase catalyzes the transcription of DNA into RNA using the four ribonucleoside triphosphates as substrates. This chain is DNA-directed RNA polymerase subunit beta, found in Triticum aestivum (Wheat).